Reading from the N-terminus, the 219-residue chain is Protein-L-isoaspartate O-methyltransferase 2 (219 aa).

The active site involves Ser60.

This sequence belongs to the methyltransferase superfamily. L-isoaspartyl/D-aspartyl protein methyltransferase family.

Its subcellular location is the cytoplasm. It carries out the reaction [protein]-L-isoaspartate + S-adenosyl-L-methionine = [protein]-L-isoaspartate alpha-methyl ester + S-adenosyl-L-homocysteine. Catalyzes the methyl esterification of L-isoaspartyl residues in peptides and proteins that result from spontaneous decomposition of normal L-aspartyl and L-asparaginyl residues. It plays a role in the repair and/or degradation of damaged proteins. The chain is Protein-L-isoaspartate O-methyltransferase 2 (pcm2) from Archaeoglobus fulgidus (strain ATCC 49558 / DSM 4304 / JCM 9628 / NBRC 100126 / VC-16).